The primary structure comprises 335 residues: Methionine import ATP-binding protein MetN (335 aa).

The region spanning 2-241 (IQFQRLHKSY…PKHATTRRFV (240 aa)) is the ABC transporter domain. Residue 38–45 (GHSGAGKS) coordinates ATP.

The protein belongs to the ABC transporter superfamily. Methionine importer (TC 3.A.1.24) family. The complex is composed of two ATP-binding proteins (MetN), two transmembrane proteins (MetI) and a solute-binding protein (MetQ).

The protein resides in the cell inner membrane. The enzyme catalyses L-methionine(out) + ATP + H2O = L-methionine(in) + ADP + phosphate + H(+). It catalyses the reaction D-methionine(out) + ATP + H2O = D-methionine(in) + ADP + phosphate + H(+). Part of the ABC transporter complex MetNIQ involved in methionine import. Responsible for energy coupling to the transport system. This is Methionine import ATP-binding protein MetN from Xanthomonas euvesicatoria pv. vesicatoria (strain 85-10) (Xanthomonas campestris pv. vesicatoria).